A 361-amino-acid polypeptide reads, in one-letter code: Beta-hexosaminidase (361 aa).

Substrate contacts are provided by residues Asp-69, Arg-77, Arg-144, and 174 to 175; that span reads KH. Residue His-187 is the Proton donor/acceptor of the active site. Catalysis depends on Asp-258, which acts as the Nucleophile.

It belongs to the glycosyl hydrolase 3 family. NagZ subfamily.

The protein resides in the cytoplasm. It catalyses the reaction Hydrolysis of terminal non-reducing N-acetyl-D-hexosamine residues in N-acetyl-beta-D-hexosaminides.. It participates in cell wall biogenesis; peptidoglycan recycling. Functionally, plays a role in peptidoglycan recycling by cleaving the terminal beta-1,4-linked N-acetylglucosamine (GlcNAc) from peptide-linked peptidoglycan fragments, giving rise to free GlcNAc, anhydro-N-acetylmuramic acid and anhydro-N-acetylmuramic acid-linked peptides. The protein is Beta-hexosaminidase of Neisseria meningitidis serogroup C / serotype 2a (strain ATCC 700532 / DSM 15464 / FAM18).